A 305-amino-acid chain; its full sequence is Probable 4-deoxy-4-formamido-L-arabinose-phosphoundecaprenol deformylase ArnD (305 aa).

Positions 7 to 262 (TKVGLRIDVD…QAKENNIEFV (256 aa)) constitute a NodB homology domain.

This sequence belongs to the polysaccharide deacetylase family. ArnD deformylase subfamily.

The catalysed reaction is 4-deoxy-4-formamido-alpha-L-arabinopyranosyl di-trans,octa-cis-undecaprenyl phosphate + H2O = 4-amino-4-deoxy-alpha-L-arabinopyranosyl di-trans,octa-cis-undecaprenyl phosphate + formate. The protein operates within glycolipid biosynthesis; 4-amino-4-deoxy-alpha-L-arabinose undecaprenyl phosphate biosynthesis; 4-amino-4-deoxy-alpha-L-arabinose undecaprenyl phosphate from UDP-4-deoxy-4-formamido-beta-L-arabinose and undecaprenyl phosphate: step 2/2. It functions in the pathway bacterial outer membrane biogenesis; lipopolysaccharide biosynthesis. In terms of biological role, catalyzes the deformylation of 4-deoxy-4-formamido-L-arabinose-phosphoundecaprenol to 4-amino-4-deoxy-L-arabinose-phosphoundecaprenol. The modified arabinose is attached to lipid A and is required for resistance to polymyxin and cationic antimicrobial peptides. The protein is Probable 4-deoxy-4-formamido-L-arabinose-phosphoundecaprenol deformylase ArnD of Shewanella sediminis (strain HAW-EB3).